Reading from the N-terminus, the 570-residue chain is Phosphoribosylaminoimidazole carboxylase (570 aa).

Positions 110–297 constitute an ATP-grasp domain; that stretch reads KQHLVKNRIP…QFEAHLRAIL (188 aa). 137–192 serves as a coordination point for ATP; that stretch reads GSSLGYPFVLKSRTLAYDGRGNFVVKSEEDIEKGLEFLANRPLYAEKWASFKKELS.

The protein in the C-terminal section; belongs to the AIR carboxylase family. Class I subfamily.

The enzyme catalyses 5-amino-1-(5-phospho-D-ribosyl)imidazole-4-carboxylate + H(+) = 5-amino-1-(5-phospho-beta-D-ribosyl)imidazole + CO2. The protein operates within purine metabolism; IMP biosynthesis via de novo pathway; 5-amino-1-(5-phospho-D-ribosyl)imidazole-4-carboxylate from 5-amino-1-(5-phospho-D-ribosyl)imidazole (carboxylase route): step 1/1. The protein is Phosphoribosylaminoimidazole carboxylase (ADE2) of Candida glabrata (strain ATCC 2001 / BCRC 20586 / JCM 3761 / NBRC 0622 / NRRL Y-65 / CBS 138) (Yeast).